The chain runs to 844 residues: Protein translocase subunit SecA 1 (844 aa).

Residues Gln91, 109-113, and Asp498 each bind ATP; that span reads GEGKT. Positions 793-813 are enriched in basic and acidic residues; the sequence is KSKSFGEAKHVTAEDGKEKAK. A disordered region spans residues 793-825; that stretch reads KSKSFGEAKHVTAEDGKEKAKPQPIVKGDQVGR. The Zn(2+) site is built by Cys829, Cys831, Cys840, and His841.

Belongs to the SecA family. Monomer and homodimer. Part of the essential Sec protein translocation apparatus which comprises SecA, SecYEG and auxiliary proteins SecDF. Other proteins may also be involved. Requires Zn(2+) as cofactor.

Its subcellular location is the cell membrane. It is found in the cytoplasm. It carries out the reaction ATP + H2O + cellular proteinSide 1 = ADP + phosphate + cellular proteinSide 2.. Part of the Sec protein translocase complex. Interacts with the SecYEG preprotein conducting channel. Has a central role in coupling the hydrolysis of ATP to the transfer of proteins into and across the cell membrane, serving as an ATP-driven molecular motor driving the stepwise translocation of polypeptide chains across the membrane. This chain is Protein translocase subunit SecA 1, found in Staphylococcus epidermidis (strain ATCC 35984 / DSM 28319 / BCRC 17069 / CCUG 31568 / BM 3577 / RP62A).